Here is a 303-residue protein sequence, read N- to C-terminus: L(+)-tartrate dehydratase subunit alpha (303 aa).

Iron-sulfur cluster is bound by residues C71, C190, and C277.

The protein belongs to the class-I fumarase family. Tetramer of two alpha and two beta subunits. It depends on iron-sulfur cluster as a cofactor.

The enzyme catalyses (2R,3R)-tartrate = oxaloacetate + H2O. This is L(+)-tartrate dehydratase subunit alpha (ttdA) from Escherichia coli O6:H1 (strain CFT073 / ATCC 700928 / UPEC).